The primary structure comprises 312 residues: MTKKLKVAIVGSGNIGTDLMIKILRHGQHLEMGALVGIDPNSDGLARAARLGVATTAEGVEGLARLPGFGEIDFVFDATSAGAHVRNEAFLRALKPGLRLIDLTPAAIGPYCVPVVNLEQNLHETNVNMVTCGGQATIPMVAAVSRVARVHYAEIVASIASRSAGPGTRANIDEFTETTSKAIEAIGGARKGKAIIVLNPAEPPLIMRDTVYVLSAPADRARVEASLAEMAQAVQGYVPGYRLKQRVQFDEIPDAAPLNIPGLGRLSGLKTSVFLEVEGAAHYLPAYAGNLDIMTSAALATAERMAQSMLNA.

Position 12-15 (12-15) interacts with NAD(+); the sequence is SGNI. Cys132 acts as the Acyl-thioester intermediate in catalysis. NAD(+) contacts are provided by residues 163–171 and Asn290; that span reads SAGPGTRAN.

Belongs to the acetaldehyde dehydrogenase family.

It catalyses the reaction acetaldehyde + NAD(+) + CoA = acetyl-CoA + NADH + H(+). The sequence is that of Acetaldehyde dehydrogenase 4 from Azotobacter vinelandii (strain DJ / ATCC BAA-1303).